The sequence spans 167 residues: CASP-like protein 3 (167 aa).

Over 1–2 (MK) the chain is Cytoplasmic. Residues 3-23 (IIAIAPRIGAAVLSLVAFSVM) form a helical membrane-spanning segment. Over 24–48 (ASTGERRSGAGSTFKVKFSDFQAYN) the chain is Extracellular. A helical transmembrane segment spans residues 49 to 69 (YLIALNVILFVYSTVQLVMLV). Residues 70 to 80 (NSNHNSSFSSP) are Cytoplasmic-facing. The chain crosses the membrane as a helical span at residues 81–101 (FKWVLGVYICDQLLAFLLFSA). The Extracellular segment spans residues 102 to 137 (SSSAATASELSRHGLHNIWPPACATWKLWTFCSKAE). A helical transmembrane segment spans residues 138 to 158 (AAVAMSFLSSFFIITSSILSG). Residues 159–167 (YHLSKVPAV) are Cytoplasmic-facing.

Belongs to the Casparian strip membrane proteins (CASP) family. Homodimer and heterodimers.

It is found in the cell membrane. In Osmunda lancea (Fern), this protein is CASP-like protein 3.